The chain runs to 106 residues: UPF0060 membrane protein Csal_2746 (106 aa).

4 consecutive transmembrane segments (helical) span residues 6–26 (LLFIATAMAEIIGCYLPWLWL), 31–51 (SPWLLVPAAASLTLFVWLLSL), 59–79 (VYAAYGGVYVVCALVWLWGVD), and 85–105 (PTDWIGAALALTGMGVIASGW).

This sequence belongs to the UPF0060 family.

It localises to the cell inner membrane. The protein is UPF0060 membrane protein Csal_2746 of Chromohalobacter salexigens (strain ATCC BAA-138 / DSM 3043 / CIP 106854 / NCIMB 13768 / 1H11).